The following is a 567-amino-acid chain: Hydrogenase-2 large chain (567 aa).

Positions 61, 64, 546, and 549 each coordinate Ni(2+). The propeptide occupies 553–567 (VVDADGNEVVSVKVL).

Belongs to the [NiFe]/[NiFeSe] hydrogenase large subunit family. As to quaternary structure, heterodimer of a large and a small subunit. The cofactor is Ni(2+).

It localises to the cell membrane. It carries out the reaction H2 + A = AH2. This is one of three E.coli hydrogenases synthesized in response to different physiological conditions. HYD2 is involved in hydrogen uptake. In Escherichia coli O157:H7, this protein is Hydrogenase-2 large chain (hybC).